A 427-amino-acid chain; its full sequence is MKLLKRLVSVFAIVLAVGSNAFAGDEVRIVIDEGVDGARPIAVVPFVGSAPEDISKIVADDLRNSGKFNPIAVSQMPQRPTSAAEVNPEAWSNIGIDAIVIGQVVPSGNGYSITYQLIDTVGASGTPGAVLMQNSYTVTNKWLRYGAHTVSDEVFEKLTAIRGAFRTRIAYVVQKNGGSQPYEVRVADYDGYNQFIVNRSAQPIMSPAWSPDGQRLAYVSFENKKSQLVVQDLNSGARKVVASFQGHNGAPAFSPDGSRLAFASSRDGVLNIYVMGANGGTPTQLTSGAGNNTEPAWSPDGNSILFTSDRSGSPQVYRMDASGGSATAVGGRGSAQISADGKTLVMINGNNNVVKQDLTTGVSEVLSTSFLGESPSLSPNGIMIIYSSTQGLGKVLQLVSADGRFKASLPGSDGQVKFPAWSPYLTK.

A signal peptide spans 1–23; the sequence is MKLLKRLVSVFAIVLAVGSNAFA.

The protein belongs to the TolB family. In terms of assembly, the Tol-Pal system is composed of five core proteins: the inner membrane proteins TolA, TolQ and TolR, the periplasmic protein TolB and the outer membrane protein Pal. They form a network linking the inner and outer membranes and the peptidoglycan layer.

The protein localises to the periplasm. Functionally, part of the Tol-Pal system, which plays a role in outer membrane invagination during cell division and is important for maintaining outer membrane integrity. The sequence is that of Tol-Pal system protein TolB from Haemophilus influenzae (strain 86-028NP).